The chain runs to 419 residues: Tyrosine--tRNA ligase (419 aa).

An L-tyrosine-binding site is contributed by Tyr-34. Positions 39–48 (PSGDSMHIGH) match the 'HIGH' region motif. L-tyrosine contacts are provided by Tyr-168 and Gln-172. Residues 230–234 (KFGKS) carry the 'KMSKS' region motif. Lys-233 is a binding site for ATP. The S4 RNA-binding domain maps to 352–418 (ANLVDWLVTL…GKKKYFLVSY (67 aa)).

This sequence belongs to the class-I aminoacyl-tRNA synthetase family. TyrS type 1 subfamily. As to quaternary structure, homodimer.

It localises to the cytoplasm. It catalyses the reaction tRNA(Tyr) + L-tyrosine + ATP = L-tyrosyl-tRNA(Tyr) + AMP + diphosphate + H(+). Catalyzes the attachment of tyrosine to tRNA(Tyr) in a two-step reaction: tyrosine is first activated by ATP to form Tyr-AMP and then transferred to the acceptor end of tRNA(Tyr). This chain is Tyrosine--tRNA ligase, found in Listeria monocytogenes serotype 4a (strain HCC23).